The primary structure comprises 92 residues: Acylphosphatase (92 aa).

A disulfide bridge links C5 with C49. The 88-residue stretch at 5-92 (CIIAWIYGRV…SGELTDFRIR (88 aa)) folds into the Acylphosphatase-like domain. Active-site residues include R20 and N38.

Belongs to the acylphosphatase family.

It catalyses the reaction an acyl phosphate + H2O = a carboxylate + phosphate + H(+). The chain is Acylphosphatase from Escherichia coli O1:K1 / APEC.